The chain runs to 341 residues: Uroporphyrinogen decarboxylase (341 aa).

Substrate-binding positions include 23-27, Asp73, Tyr148, Ser203, and His318; that span reads RQAGR.

The protein belongs to the uroporphyrinogen decarboxylase family. Homodimer.

Its subcellular location is the cytoplasm. It catalyses the reaction uroporphyrinogen III + 4 H(+) = coproporphyrinogen III + 4 CO2. The protein operates within porphyrin-containing compound metabolism; protoporphyrin-IX biosynthesis; coproporphyrinogen-III from 5-aminolevulinate: step 4/4. Catalyzes the decarboxylation of four acetate groups of uroporphyrinogen-III to yield coproporphyrinogen-III. The polypeptide is Uroporphyrinogen decarboxylase (Brucella suis (strain ATCC 23445 / NCTC 10510)).